Here is a 90-residue protein sequence, read N- to C-terminus: DNA-directed RNA polymerase subunit omega (90 aa).

This sequence belongs to the RNA polymerase subunit omega family. In terms of assembly, the RNAP catalytic core consists of 2 alpha, 1 beta, 1 beta' and 1 omega subunit. When a sigma factor is associated with the core the holoenzyme is formed, which can initiate transcription.

It carries out the reaction RNA(n) + a ribonucleoside 5'-triphosphate = RNA(n+1) + diphosphate. In terms of biological role, promotes RNA polymerase assembly. Latches the N- and C-terminal regions of the beta' subunit thereby facilitating its interaction with the beta and alpha subunits. The sequence is that of DNA-directed RNA polymerase subunit omega from Streptomyces griseus subsp. griseus (strain JCM 4626 / CBS 651.72 / NBRC 13350 / KCC S-0626 / ISP 5235).